A 40-amino-acid chain; its full sequence is Snaclec tokaracetin subunit alpha (40 aa).

The 40-residue stretch at 1–40 (DCPSGWSSFKQYCYKPFKQLKTWEDAERFCLEQVKGAHLV) folds into the C-type lectin domain. An intrachain disulfide couples Cys-2 to Cys-13.

It belongs to the snaclec family. Heterodimer of subunits alpha and beta; disulfide-linked. As to expression, expressed by the venom gland.

The protein localises to the secreted. Its function is as follows. Platelet antagonist that specifically and reversibly binds to a site on platelet glycoprotein Ibalpha (GP1BA) close to or identical with the site for vWF binding. It inhibits the binding of vWF to platelets and vWF-dependent shear-induced platelet aggregation. This Protobothrops tokarensis (Tokara habu) protein is Snaclec tokaracetin subunit alpha.